Consider the following 281-residue polypeptide: Protein NipSnap homolog 2 (281 aa).

A mitochondrion-targeting transit peptide spans 1 to 27 (MAARVLLARGGLLRPAAQSAFLPGLRT).

Belongs to the NipSnap family. Interacts with CALCOCO2/NDP52, NBR1, SQSTM1/p62, TAX1BP1 and WDFY3/ALFY. Interacts with ATG8 family proteins (MAP1LC3A, MAP1LC3B, MAP1LC3C, GABARAP, GABARAPL1 and GABARAPL2). Interacts with VDAC1.

The protein resides in the mitochondrion matrix. Its subcellular location is the cytoplasm. Functionally, protein involved in mitophagy by facilitating recruitment of the autophagy machinery required for clearance of damaged mitochondria. Accumulates on the mitochondria surface in response to mitochondrial depolarization and acts as a 'eat me' signal by recruiting proteins involved in selective autophagy, such as autophagy receptors (CALCOCO2/NDP52, NBR1, SQSTM1/p62, TAX1BP1 and WDFY3/ALFY) and ATG8 family proteins (MAP1LC3A, MAP1LC3B, MAP1LC3C, GABARAP, GABARAPL1 and GABARAPL2). May act as a positive regulator of L-type calcium channels. The sequence is that of Protein NipSnap homolog 2 from Mus musculus (Mouse).